The chain runs to 141 residues: VLSSKDKANIKTAFGKIGGHAADYGAEALERMFLGFPTTKTYFPHFDLSHGSAQVKAHGKKVGDALTKAADHLDDLPSALSALSDLHAHKLRVDPVNFKLLSHCLLVTVAAHHPGDFTPAVDASLDKFLANVSTVLTSKYR.

One can recognise a Globin domain in the interval 1 to 141; it reads VLSSKDKANI…VSTVLTSKYR (141 aa). Ser3 carries the phosphoserine modification. N6-succinyllysine is present on residues Lys7 and Lys11. Residue Lys16 is modified to N6-acetyllysine; alternate. The residue at position 16 (Lys16) is an N6-succinyllysine; alternate. Position 24 is a phosphotyrosine (Tyr24). Residue Lys40 is modified to N6-succinyllysine. Residue Ser49 is modified to Phosphoserine. Residue His58 coordinates O2. His87 is a binding site for heme b. At Ser102 the chain carries Phosphoserine. A Phosphothreonine modification is found at Thr108. Residue Ser124 is modified to Phosphoserine. Phosphothreonine is present on residues Thr134 and Thr137. Ser138 carries the post-translational modification Phosphoserine.

This sequence belongs to the globin family. As to quaternary structure, heterotetramer of two alpha chains and two beta chains. As to expression, red blood cells.

Its function is as follows. Involved in oxygen transport from the lung to the various peripheral tissues. In terms of biological role, hemopressin acts as an antagonist peptide of the cannabinoid receptor CNR1. Hemopressin-binding efficiently blocks cannabinoid receptor CNR1 and subsequent signaling. The polypeptide is Hemoglobin subunit alpha (HBA) (Lama glama (Llama)).